A 397-amino-acid chain; its full sequence is Protein WRKY1 (397 aa).

A DNA-binding region (WRKY) is located at residues 326-392; it reads KVADIPADEF…YEGDHNHNRV (67 aa).

It belongs to the WRKY group II-d family. As to quaternary structure, interacts with RS2. As to expression, more abundant in apices and young leaf primordia than in fully expanded leaf tissues.

The protein resides in the nucleus. Its function is as follows. Transcription factor. Interacts specifically with the W box (5'-(T)TGAC[CT]-3'), a frequently occurring elicitor-responsive cis-acting element. The protein is Protein WRKY1 of Zea mays (Maize).